Reading from the N-terminus, the 408-residue chain is Dual-specificity RNA methyltransferase RlmN (408 aa).

Glu-126 functions as the Proton acceptor in the catalytic mechanism. The Radical SAM core domain maps to 132-373; that stretch reads EEGRGTLCLS…NQAGYASPIR (242 aa). A disulfide bridge links Cys-139 with Cys-384. [4Fe-4S] cluster is bound by residues Cys-146, Cys-150, and Cys-153. S-adenosyl-L-methionine is bound by residues 210–211, Ser-242, 264–266, and Asn-341; these read GE and SLH. Cys-384 serves as the catalytic S-methylcysteine intermediate.

It belongs to the radical SAM superfamily. RlmN family. Requires [4Fe-4S] cluster as cofactor.

The protein resides in the cytoplasm. The catalysed reaction is adenosine(2503) in 23S rRNA + 2 reduced [2Fe-2S]-[ferredoxin] + 2 S-adenosyl-L-methionine = 2-methyladenosine(2503) in 23S rRNA + 5'-deoxyadenosine + L-methionine + 2 oxidized [2Fe-2S]-[ferredoxin] + S-adenosyl-L-homocysteine. It carries out the reaction adenosine(37) in tRNA + 2 reduced [2Fe-2S]-[ferredoxin] + 2 S-adenosyl-L-methionine = 2-methyladenosine(37) in tRNA + 5'-deoxyadenosine + L-methionine + 2 oxidized [2Fe-2S]-[ferredoxin] + S-adenosyl-L-homocysteine. Its function is as follows. Specifically methylates position 2 of adenine 2503 in 23S rRNA and position 2 of adenine 37 in tRNAs. m2A2503 modification seems to play a crucial role in the proofreading step occurring at the peptidyl transferase center and thus would serve to optimize ribosomal fidelity. This Bartonella henselae (strain ATCC 49882 / DSM 28221 / CCUG 30454 / Houston 1) (Rochalimaea henselae) protein is Dual-specificity RNA methyltransferase RlmN.